A 312-amino-acid polypeptide reads, in one-letter code: Fe-S cluster assembly protein DRE2 (312 aa).

Residues 7–139 (LSDVPRVLLL…VKPVFEEQSV (133 aa)) are N-terminal SAM-like domain. A linker region spans residues 140-204 (LLPFSINRSQ…EDELINEDEL (65 aa)). The [2Fe-2S] cluster site is built by Cys214, Cys225, Cys228, and Cys230. Residues 214–230 (CRPKAGKRRRACKDCTC) form a fe-S binding site A region. The [4Fe-4S] cluster site is built by Cys275, Cys278, Cys286, and Cys289. 2 consecutive short sequence motifs (cx2C motif) follow at residues 275 to 278 (CGNC) and 286 to 289 (CDGC). The interval 275–289 (CGNCSLGDAFRCDGC) is fe-S binding site B.

This sequence belongs to the anamorsin family. As to quaternary structure, monomer. Interacts with TAH18. Interacts with MIA40. Requires [2Fe-2S] cluster as cofactor. [4Fe-4S] cluster serves as cofactor.

The protein resides in the cytoplasm. It localises to the mitochondrion intermembrane space. Its function is as follows. Component of the cytosolic iron-sulfur (Fe-S) protein assembly (CIA) machinery required for the maturation of extramitochondrial Fe-S proteins. Part of an electron transfer chain functioning in an early step of cytosolic Fe-S biogenesis, facilitating the de novo assembly of a [4Fe-4S] cluster on the scaffold complex CFD1-NBP35. Electrons are transferred to DRE2 from NADPH via the FAD- and FMN-containing protein TAH18. TAH18-DRE2 are also required for the assembly of the diferric tyrosyl radical cofactor of ribonucleotide reductase (RNR), probably by providing electrons for reduction during radical cofactor maturation in the catalytic small subunit RNR2. The chain is Fe-S cluster assembly protein DRE2 from Arthroderma otae (strain ATCC MYA-4605 / CBS 113480) (Microsporum canis).